Here is a 474-residue protein sequence, read N- to C-terminus: Bifunctional protein HldE (474 aa).

A ribokinase region spans residues Met1–Glu318. An ATP-binding site is contributed by Asn194–Glu197. The active site involves Asp263. The segment at Phe343–Gly474 is cytidylyltransferase.

It in the N-terminal section; belongs to the carbohydrate kinase PfkB family. In the C-terminal section; belongs to the cytidylyltransferase family. As to quaternary structure, homodimer.

The catalysed reaction is D-glycero-beta-D-manno-heptose 7-phosphate + ATP = D-glycero-beta-D-manno-heptose 1,7-bisphosphate + ADP + H(+). The enzyme catalyses D-glycero-beta-D-manno-heptose 1-phosphate + ATP + H(+) = ADP-D-glycero-beta-D-manno-heptose + diphosphate. It functions in the pathway nucleotide-sugar biosynthesis; ADP-L-glycero-beta-D-manno-heptose biosynthesis; ADP-L-glycero-beta-D-manno-heptose from D-glycero-beta-D-manno-heptose 7-phosphate: step 1/4. The protein operates within nucleotide-sugar biosynthesis; ADP-L-glycero-beta-D-manno-heptose biosynthesis; ADP-L-glycero-beta-D-manno-heptose from D-glycero-beta-D-manno-heptose 7-phosphate: step 3/4. It participates in bacterial outer membrane biogenesis; LPS core biosynthesis. Catalyzes the phosphorylation of D-glycero-D-manno-heptose 7-phosphate at the C-1 position to selectively form D-glycero-beta-D-manno-heptose-1,7-bisphosphate. Functionally, catalyzes the ADP transfer from ATP to D-glycero-beta-D-manno-heptose 1-phosphate, yielding ADP-D-glycero-beta-D-manno-heptose. This chain is Bifunctional protein HldE, found in Pseudomonas aeruginosa (strain ATCC 15692 / DSM 22644 / CIP 104116 / JCM 14847 / LMG 12228 / 1C / PRS 101 / PAO1).